A 224-amino-acid chain; its full sequence is Metalloproteinase inhibitor 4 (224 aa).

Residues M1 to A29 form the signal peptide. A Zn(2+)-binding site is contributed by C30. Involved in metalloproteinase-binding regions lie at residues C30 to A33 and S99 to S100. Disulfide bonds link C30–C102, C32–C131, C42–C156, C158–C205, C163–C168, and C176–C197. The NTR domain occupies C30–C156.

It belongs to the protease inhibitor I35 (TIMP) family. In terms of tissue distribution, expressed in brain, heart, ovary and skeletal muscle.

It localises to the secreted. Functionally, complexes with metalloproteinases (such as collagenases) and irreversibly inactivates them by binding to their catalytic zinc cofactor. This Mus musculus (Mouse) protein is Metalloproteinase inhibitor 4 (Timp4).